The following is a 438-amino-acid chain: Transmembrane protease serine 11F (438 aa).

Residues 1 to 32 lie on the Cytoplasmic side of the membrane; that stretch reads MMYAPVEFSEAEFSRAEYQRKQQFWDSVRLAL. The helical; Signal-anchor for type II membrane protein transmembrane segment at 33–53 threads the bilayer; the sequence is FTLAIVAIIGIAIGIVTHFVV. Residues 54–438 are Extracellular-facing; the sequence is EDDKSFYYLA…RDWIASKTGM (385 aa). Residues 57–175 form the SEA domain; that stretch reads KSFYYLASFK…PSFRLTPIDS (119 aa). The Peptidase S1 domain occupies 206–437; that stretch reads IVQGRETAME…YRDWIASKTG (232 aa). Cys233 and Cys249 are disulfide-bonded. Active-site charge relay system residues include His248 and Asp293. Cystine bridges form between Cys358–Cys374 and Cys385–Cys413. The Charge relay system role is filled by Ser389.

This sequence belongs to the peptidase S1 family.

The protein resides in the membrane. Functionally, probable serine protease. This Homo sapiens (Human) protein is Transmembrane protease serine 11F (TMPRSS11F).